The sequence spans 327 residues: MTITLTENKRKSMEKLSVDGVISALAFDQRGALKRMMAQHQTKEPTVEQIEELKSLVSEELTPFASSILLDPEYGLPASRVRSEEAGLLLAYEKTGYDATTTSRLPDCLDVWSAKRIKEAGAEAVKFLIYYDIDGGQDVNEQKKAYIERIGSECRAEDIPFYLEILTYDEKIADNASPEFAKVKAHKVNEAMKVFSKERFGVDVLKVEVPVNMKFVEGFADGEILFTKEEAAQAFRDQEASTDLPYIYLSAGVSAKLFQDTLVFAAESGAKFNGVLCGRATWAGSVKVYIEEGPQAAREWLRTEGFKNIDELNKVLDKTASPWTEKM.

The protein belongs to the aldolase LacD family.

The enzyme catalyses D-tagatofuranose 1,6-bisphosphate = D-glyceraldehyde 3-phosphate + dihydroxyacetone phosphate. The protein operates within carbohydrate metabolism; D-tagatose 6-phosphate degradation; D-glyceraldehyde 3-phosphate and glycerone phosphate from D-tagatose 6-phosphate: step 2/2. The sequence is that of Tagatose 1,6-diphosphate aldolase 2 (lacD2) from Streptococcus pyogenes serotype M3 (strain ATCC BAA-595 / MGAS315).